The primary structure comprises 230 residues: Ribose-5-phosphate isomerase A (230 aa).

Substrate-binding positions include 32–35, 85–88, and 98–101; these read TGST, DGAD, and KGGG. Glutamate 107 serves as the catalytic Proton acceptor. Position 125 (lysine 125) interacts with substrate.

The protein belongs to the ribose 5-phosphate isomerase family. As to quaternary structure, homodimer.

It catalyses the reaction aldehydo-D-ribose 5-phosphate = D-ribulose 5-phosphate. It participates in carbohydrate degradation; pentose phosphate pathway; D-ribose 5-phosphate from D-ribulose 5-phosphate (non-oxidative stage): step 1/1. Its function is as follows. Catalyzes the reversible conversion of ribose-5-phosphate to ribulose 5-phosphate. In Burkholderia ambifaria (strain ATCC BAA-244 / DSM 16087 / CCUG 44356 / LMG 19182 / AMMD) (Burkholderia cepacia (strain AMMD)), this protein is Ribose-5-phosphate isomerase A.